A 165-amino-acid polypeptide reads, in one-letter code: Growth arrest and DNA damage-inducible protein GADD45 alpha (165 aa).

The residue at position 2 (Thr2) is a Phosphothreonine.

It belongs to the GADD45 family. Interacts with MAPK14. Predominantly monomeric but also forms dimers and other oligomers as concentration increases. Interacts with GADD45GIP1. Interacts weakly with PCNA. Interacts with AURKA, likely to compete with dimerization.

The protein resides in the nucleus. Its function is as follows. In T-cells, functions as a regulator of p38 MAPKs by inhibiting p88 phosphorylation and activity. Might affect PCNA interaction with some CDK (cell division protein kinase) complexes; stimulates DNA excision repair in vitro and inhibits entry of cells into S phase. This Homo sapiens (Human) protein is Growth arrest and DNA damage-inducible protein GADD45 alpha (GADD45A).